A 196-amino-acid chain; its full sequence is MNLKRISEAKLPTPWGDFLMIGFKELDKEQDHLALVLGDISTDAPVLSRIHSECLTGDALFSLRCDCGFQLKAAFKQICEEKRGLLIYHRQEGRNIGLLNKIRAYALQDQGADTVEANHQLGFATDERDFTVCANIYKILDVKAIRLLTNNPEKIKILKKEGINVVQRVSLIVESNPNNQDYLSTKKNKMGHFFKK.

Residue 49–53 participates in GTP binding; the sequence is RIHSE. 3 residues coordinate Zn(2+): cysteine 54, cysteine 65, and cysteine 67. GTP is bound by residues glutamine 70, 92-94, and threonine 114; that span reads EGR. Aspartate 126 acts as the Proton acceptor in catalysis. The active-site Nucleophile is the arginine 128. 2 residues coordinate GTP: threonine 149 and lysine 154.

This sequence belongs to the GTP cyclohydrolase II family. Homodimer. Requires Zn(2+) as cofactor.

It catalyses the reaction GTP + 4 H2O = 2,5-diamino-6-hydroxy-4-(5-phosphoribosylamino)-pyrimidine + formate + 2 phosphate + 3 H(+). Its pathway is cofactor biosynthesis; riboflavin biosynthesis; 5-amino-6-(D-ribitylamino)uracil from GTP: step 1/4. Catalyzes the conversion of GTP to 2,5-diamino-6-ribosylamino-4(3H)-pyrimidinone 5'-phosphate (DARP), formate and pyrophosphate. The protein is GTP cyclohydrolase-2 of Hamiltonella defensa subsp. Acyrthosiphon pisum (strain 5AT).